Consider the following 324-residue polypeptide: Aldo-keto reductase family 1 member A1-A (324 aa).

NADP(+) contacts are provided by residues 10-19 (GQRMPTVGLG), Thr-20, Trp-21, and Asp-44. Tyr-49 functions as the Proton donor in the catalytic mechanism. NADP(+)-binding residues include Ser-161, Asn-162, Ser-210, Leu-212, Ser-214, Lys-262, Ser-263, Val-264, Thr-265, Arg-268, Gln-271, and Asn-272.

It belongs to the aldo/keto reductase family.

The protein localises to the cytoplasm. The protein resides in the cytosol. Its subcellular location is the apical cell membrane. The enzyme catalyses a primary alcohol + NADP(+) = an aldehyde + NADPH + H(+). The catalysed reaction is S-nitroso-CoA + NADPH + H(+) = sulfinamide-CoA + NADP(+). It carries out the reaction S-nitrosoglutathione + NADPH + H(+) = S-(hydroxysulfenamide)glutathione + NADP(+). Functionally, catalyzes the NADPH-dependent reduction of a wide variety of carbonyl-containing compounds to their corresponding alcohols. Displays enzymatic activity towards endogenous metabolites such as aromatic and aliphatic aldehydes, ketones, monosaccharides and bile acids. Acts as an aldehyde-detoxification enzyme. Also acts as an inhibitor of protein S-nitrosylation by mediating degradation of S-nitroso-coenzyme A (S-nitroso-CoA), a cofactor required to S-nitrosylate proteins. Also acts as a S-nitroso-glutathione reductase by catalyzing the NADPH-dependent reduction of S-nitrosoglutathione. Displays no reductase activity towards retinoids. This Danio rerio (Zebrafish) protein is Aldo-keto reductase family 1 member A1-A (akr1a1a).